The chain runs to 145 residues: Transcriptional regulator MraZ (145 aa).

SpoVT-AbrB domains are found at residues T5 to E49 and T78 to V121.

Belongs to the MraZ family. Forms oligomers.

The protein localises to the cytoplasm. Its subcellular location is the nucleoid. This is Transcriptional regulator MraZ from Ureaplasma parvum serovar 3 (strain ATCC 27815 / 27 / NCTC 11736).